We begin with the raw amino-acid sequence, 545 residues long: E3 ubiquitin-protein ligase ipaH9.8 (545 aa).

The tract at residues 1–242 (MLPINNNFSL…YHGPRIYFSM (242 aa)) is interaction with target proteins. LRR repeat units lie at residues 57 to 77 (NSDELRLDRLNLSSLPDNLPA), 78 to 99 (QITLLNVSYNQLTNLPELPVTL), 100 to 117 (KKLYSASNKLSELPVLPP), 118 to 139 (ALESLQVQHNELENLPALPDSL), 140 to 157 (LTMNISYNEIVSLPSLPQ), 158 to 179 (ALKNLRATRNFLTELPAFSEGN), 182 to 203 (VVREYFFDRNQISHIPESILNL), and 205 to 228 (NECSIHISDNPLSSHALQALQRLT). Residues 243–250 (SDGQQNTL) are linker. The segment at 251 to 545 (HRPLADAVTA…SENGSQLHHS (295 aa)) is E3 ubiquitin-protein ligase catalytic domain. The NEL domain occupies 253 to 545 (PLADAVTAWF…SENGSQLHHS (293 aa)). The active-site Glycyl thioester intermediate is the Cys-337.

The protein belongs to the LRR-containing bacterial E3 ligase family. In terms of assembly, also interacts with human and mouse U2AF1 (U2AF35). Ubiquitinated in the presence of host E1 ubiquitin-activating enzyme, E2 ubiquitin-conjugating enzyme and ubiquitin.

The protein resides in the secreted. The protein localises to the host cytoplasm. Its subcellular location is the host nucleus. It carries out the reaction S-ubiquitinyl-[E2 ubiquitin-conjugating enzyme]-L-cysteine + [acceptor protein]-L-lysine = [E2 ubiquitin-conjugating enzyme]-L-cysteine + N(6)-ubiquitinyl-[acceptor protein]-L-lysine.. Its activity is regulated as follows. Exists in an autoinhibited state in the absence of substrate protein, due to interactions of the leucine-rich repeats with NEL domain. Is activated upon binding to a substrate protein. In terms of biological role, effector E3 ubiquitin ligase that interferes with host's ubiquitination pathway and modulates the acute inflammatory responses, thus facilitating bacterial colonization within the host cell. Interacts with IKBKG (NEMO) and TNIP1 (ABIN-1), a ubiquitin-binding adapter protein, which results in TNIP1-dependent 'Lys-27'-linked polyubiquitination of IKBKG. Consequently, polyubiquitinated IKBKG undergoes proteasome-dependent degradation, which perturbs NF-kappa-B activation during bacterial infection. Mediates polyubiquitination of host U2AF1, leading to its proteasomal degradation. Catalyzes 'Lys-48'-linked polyubiquitination and subsequent degradation of a subset of host guanylate-binding proteins (GBP1, GBP2, GBP4 and GBP6), thereby suppressing host cell defense. In contrast, host GBP3 and GBP7 are not ubiquitinated by IpaH9.8. Uses UBE2D2 (UBCH5B) as an E2 ubiquitin-conjugating enzyme. The sequence is that of E3 ubiquitin-protein ligase ipaH9.8 (ipaH9.8) from Shigella dysenteriae serotype 1 (strain Sd197).